The chain runs to 555 residues: Intraflagellar transport protein 56 (555 aa).

TPR repeat units follow at residues 57 to 90, 151 to 184, and 393 to 426; these read LKNL…EDPD, IEDQ…HRDY, and DDFN…KYRN.

The protein belongs to the IFT56 family. In terms of assembly, component of the IFT complex B.

Its subcellular location is the cell projection. It is found in the cilium. The protein resides in the flagellum. Functionally, component of the intraflagellar transport (IFT) complex B required for transport of proteins in the motile cilium. Required for transport of specific ciliary cargo proteins related to motility, while it is neither required for IFT complex B assembly or motion nor for cilium assembly. In Chlamydomonas reinhardtii (Chlamydomonas smithii), this protein is Intraflagellar transport protein 56.